We begin with the raw amino-acid sequence, 160 residues long: uncharacterized protein (160 aa).

Positions 5 to 160 (ISLSFYKPEH…GEQLILHHFL (156 aa)) constitute an N-acetyltransferase domain.

This is an uncharacterized protein from Bacillus subtilis (strain 168).